The sequence spans 251 residues: uncharacterized protein (251 aa).

The signal sequence occupies residues 1–19 (MRYLKRITIYISLLILVSG). Cysteine 20 carries N-palmitoyl cysteine lipidation. Residue cysteine 20 is the site of S-diacylglycerol cysteine attachment.

It belongs to the staphylococcal tandem lipoprotein family.

The protein resides in the cell membrane. This is an uncharacterized protein from Staphylococcus epidermidis (strain ATCC 12228 / FDA PCI 1200).